Consider the following 132-residue polypeptide: 3-aminoacrylate deaminase RutC (132 aa).

This sequence belongs to the RutC family.

The enzyme catalyses (Z)-3-aminoacrylate + H2O + H(+) = 3-oxopropanoate + NH4(+). Involved in pyrimidine catabolism. Catalyzes the deamination of 3-aminoacrylate to malonic semialdehyde, a reaction that can also occur spontaneously. RutC may facilitate the reaction and modulate the metabolic fitness, rather than catalyzing essential functions. In Cronobacter turicensis (strain DSM 18703 / CCUG 55852 / LMG 23827 / z3032), this protein is 3-aminoacrylate deaminase RutC.